The primary structure comprises 228 residues: ATP-dependent dethiobiotin synthetase BioD (228 aa).

14–19 (DAGKTL) lines the ATP pocket. Thr-18 provides a ligand contact to Mg(2+). Lys-39 is an active-site residue. ATP is bound by residues Asp-56, 117–120 (EGAG), and 206–208 (PRL). Residues Asp-56 and Glu-117 each coordinate Mg(2+).

This sequence belongs to the dethiobiotin synthetase family. As to quaternary structure, homodimer. The cofactor is Mg(2+).

It is found in the cytoplasm. The catalysed reaction is (7R,8S)-7,8-diammoniononanoate + CO2 + ATP = (4R,5S)-dethiobiotin + ADP + phosphate + 3 H(+). Its pathway is cofactor biosynthesis; biotin biosynthesis; biotin from 7,8-diaminononanoate: step 1/2. Its function is as follows. Catalyzes a mechanistically unusual reaction, the ATP-dependent insertion of CO2 between the N7 and N8 nitrogen atoms of 7,8-diaminopelargonic acid (DAPA, also called 7,8-diammoniononanoate) to form a ureido ring. This chain is ATP-dependent dethiobiotin synthetase BioD, found in Cellvibrio japonicus (strain Ueda107) (Pseudomonas fluorescens subsp. cellulosa).